The chain runs to 392 residues: L-rhamnonate dehydratase (392 aa).

Residues His-22 and Arg-48 each coordinate substrate. Asp-214, Glu-240, and Glu-268 together coordinate Mg(2+). Residue His-318 is the Proton acceptor of the active site. Substrate is bound at residue Glu-338.

The protein belongs to the mandelate racemase/muconate lactonizing enzyme family. RhamD subfamily. Homooctamer; tetramer of dimers. The cofactor is Mg(2+).

It carries out the reaction L-rhamnonate = 2-dehydro-3-deoxy-L-rhamnonate + H2O. Functionally, catalyzes the dehydration of L-rhamnonate to 2-keto-3-deoxy-L-rhamnonate (KDR). The chain is L-rhamnonate dehydratase from Burkholderia orbicola (strain MC0-3).